Here is a 301-residue protein sequence, read N- to C-terminus: HTH-type transcriptional regulator MtrA (301 aa).

The 102-residue stretch at lysine 196–glutamate 297 folds into the HTH araC/xylS-type domain. 2 consecutive DNA-binding regions (H-T-H motif) follow at residues aspartate 216–valine 237 and valine 264–tyrosine 287.

The affinity for the mtrCDE promoter increases 2-fold in the presence of TX-100, a known effector and substrate of the MtrCDE pump. In terms of biological role, involved in the induction of the mtrCDE-encoded efflux pump. Binds specifically to the mtrCDE promoter region. Required for high-level inducible resistance to the detergent Triton X-100 (TX-100) and the spermicide nonoxynol-9 (N-9). The chain is HTH-type transcriptional regulator MtrA from Neisseria gonorrhoeae.